A 517-amino-acid polypeptide reads, in one-letter code: Splicing factor U2AF 59 kDa subunit (517 aa).

Low complexity predominate over residues 1–13 (MDLSSRLSSGSSR). The disordered stretch occupies residues 1 to 112 (MDLSSRLSSG…PSRERSVRSI (112 aa)). Residues 20–89 (DYRDEEPRRE…RRYDDYEPRS (70 aa)) are compositionally biased toward basic and acidic residues. 2 RRM domains span residues 310–388 (DKIY…FACV) and 418–509 (RVLQ…FYGE).

Belongs to the splicing factor SR family. As to quaternary structure, forms a heterodimer with the U2AF small subunit. Can also form a homodimer. U2AF large subunit (U2AF59), U2AF small subunit (U2AF23) and SF1 (bpb1) interact to form a complex required for complex A formation. Interacts with wat1/pop3.

The protein localises to the nucleus. Its function is as follows. Necessary for the splicing of pre-mRNA. The SF1-U2AF59-U2AF23 complex has a role in the recognition of the branch site (5'-UACUAAC-3'), the pyrimidine tract and the 3'-splice site at the 3'-end of introns. In Schizosaccharomyces pombe (strain 972 / ATCC 24843) (Fission yeast), this protein is Splicing factor U2AF 59 kDa subunit (prp2).